The chain runs to 343 residues: F17c-G fimbrial adhesin (343 aa).

Residues 1 to 22 form the signal peptide; sequence MTNFYKVFLAVFILVCCNISHA. Positions 23–199 are receptor-binding lectin domain; sequence AVSFIGSTEN…LNPFTLNDTV (177 aa). Residues 65 to 66, 110 to 111, and 138 to 141 each bind a carbohydrate; these read AN, DT, and STQG. Cysteine 75 and cysteine 132 are oxidised to a cystine. The interval 200–343 is fimbrillin-binding domain; sequence TSCRLLTPSA…GISTFTFSYQ (144 aa). Positions 287 to 307 are disordered; that stretch reads LKFGPDSPVKGNENQWQLSTG. The segment covering 298-307 has biased composition (polar residues); sequence NENQWQLSTG.

Belongs to the fimbrial protein family.

It is found in the fimbrium. Functionally, essential fimbrial adhesion factor that mediates binding to N-acetylglucosamine-containing receptors in the host intestinal microvilli, leading to colonization of the intestinal tissue, and diarrhea or septicemia. Also confers adhesiveness to laminin and basement membranes. This is F17c-G fimbrial adhesin (f17cG) from Escherichia coli.